The primary structure comprises 139 residues: Nucleoside diphosphate kinase (139 aa).

6 residues coordinate ATP: Lys-11, Phe-59, Arg-87, Thr-93, Arg-104, and Asn-114. The Pros-phosphohistidine intermediate role is filled by His-117.

The protein belongs to the NDK family. In terms of assembly, homotetramer. Mg(2+) serves as cofactor.

It localises to the cytoplasm. It catalyses the reaction a 2'-deoxyribonucleoside 5'-diphosphate + ATP = a 2'-deoxyribonucleoside 5'-triphosphate + ADP. The catalysed reaction is a ribonucleoside 5'-diphosphate + ATP = a ribonucleoside 5'-triphosphate + ADP. Functionally, major role in the synthesis of nucleoside triphosphates other than ATP. The ATP gamma phosphate is transferred to the NDP beta phosphate via a ping-pong mechanism, using a phosphorylated active-site intermediate. The chain is Nucleoside diphosphate kinase from Wolbachia pipientis subsp. Culex pipiens (strain wPip).